The chain runs to 539 residues: CTP synthase (539 aa).

Positions 1–272 are amidoligase domain; the sequence is MTLRSKMTKY…AQIILSHFKI (272 aa). S19 provides a ligand contact to CTP. Position 19 (S19) interacts with UTP. Residue 20-25 coordinates ATP; that stretch reads GLGKGV. Residue Y60 participates in L-glutamine binding. D77 provides a ligand contact to ATP. Residues D77 and E147 each contribute to the Mg(2+) site. Residues 154–156, 193–198, and K229 contribute to the CTP site; these read DIE and KSKPTQ. Residues 193–198 and K229 contribute to the UTP site; that span reads KSKPTQ. In terms of domain architecture, Glutamine amidotransferase type-1 spans 298–539; that stretch reads KILMVGKYVE…SFLRVLIKNN (242 aa). Residue G360 participates in L-glutamine binding. The Nucleophile; for glutamine hydrolysis role is filled by C387. Residues 388–391, E410, and R469 contribute to the L-glutamine site; that span reads LGFQ. Active-site residues include H514 and E516.

The protein belongs to the CTP synthase family. Homotetramer.

The catalysed reaction is UTP + L-glutamine + ATP + H2O = CTP + L-glutamate + ADP + phosphate + 2 H(+). It carries out the reaction L-glutamine + H2O = L-glutamate + NH4(+). It catalyses the reaction UTP + NH4(+) + ATP = CTP + ADP + phosphate + 2 H(+). Its pathway is pyrimidine metabolism; CTP biosynthesis via de novo pathway; CTP from UDP: step 2/2. With respect to regulation, allosterically activated by GTP, when glutamine is the substrate; GTP has no effect on the reaction when ammonia is the substrate. The allosteric effector GTP functions by stabilizing the protein conformation that binds the tetrahedral intermediate(s) formed during glutamine hydrolysis. Inhibited by the product CTP, via allosteric rather than competitive inhibition. In terms of biological role, catalyzes the ATP-dependent amination of UTP to CTP with either L-glutamine or ammonia as the source of nitrogen. Regulates intracellular CTP levels through interactions with the four ribonucleotide triphosphates. The sequence is that of CTP synthase from Mycoplasmopsis pulmonis (strain UAB CTIP) (Mycoplasma pulmonis).